A 327-amino-acid polypeptide reads, in one-letter code: Protein-L-isoaspartate O-methyltransferase (327 aa).

Disordered regions lie at residues 1–38 and 62–105; these read MSGE…DAAR and PRAA…KSAT. The segment covering 14 to 29 has biased composition (basic and acidic residues); sequence EDLKREPRKPEGRAAE. The span at 62 to 77 shows a compositional bias: low complexity; that stretch reads PRAAGASGSGVPVAKP. Over residues 92–105 the composition is skewed to polar residues; sequence APSSGVKNGDKSAT. Serine 175 is an active-site residue.

It belongs to the methyltransferase superfamily. L-isoaspartyl/D-aspartyl protein methyltransferase family.

The protein resides in the cytoplasm. The enzyme catalyses [protein]-L-isoaspartate + S-adenosyl-L-methionine = [protein]-L-isoaspartate alpha-methyl ester + S-adenosyl-L-homocysteine. Functionally, catalyzes the methyl esterification of L-isoaspartyl residues in peptides and proteins that result from spontaneous decomposition of normal L-aspartyl and L-asparaginyl residues. It plays a role in the repair and/or degradation of damaged proteins. The sequence is that of Protein-L-isoaspartate O-methyltransferase from Burkholderia thailandensis (strain ATCC 700388 / DSM 13276 / CCUG 48851 / CIP 106301 / E264).